The chain runs to 210 residues: Outer-membrane lipoprotein carrier protein (210 aa).

The N-terminal stretch at 1–23 (MLMFSRFRYIFFAVALLSGPVCA) is a signal peptide.

It belongs to the LolA family. Monomer.

Its subcellular location is the periplasm. Participates in the translocation of lipoproteins from the inner membrane to the outer membrane. Only forms a complex with a lipoprotein if the residue after the N-terminal Cys is not an aspartate (The Asp acts as a targeting signal to indicate that the lipoprotein should stay in the inner membrane). This Xylella fastidiosa (strain Temecula1 / ATCC 700964) protein is Outer-membrane lipoprotein carrier protein.